The following is a 100-amino-acid chain: Urease subunit gamma (100 aa).

The protein belongs to the urease gamma subunit family. As to quaternary structure, heterotrimer of UreA (gamma), UreB (beta) and UreC (alpha) subunits. Three heterotrimers associate to form the active enzyme.

It localises to the cytoplasm. The enzyme catalyses urea + 2 H2O + H(+) = hydrogencarbonate + 2 NH4(+). Its pathway is nitrogen metabolism; urea degradation; CO(2) and NH(3) from urea (urease route): step 1/1. This chain is Urease subunit gamma, found in Citrobacter koseri (strain ATCC BAA-895 / CDC 4225-83 / SGSC4696).